Reading from the N-terminus, the 1648-residue chain is Putative 1-phosphatidylinositol-3-phosphate 5-kinase FAB1C (1648 aa).

Residues 97-106 (YDKVHPRDSP) are compositionally biased toward basic and acidic residues. 4 disordered regions span residues 97-116 (YDKV…ATES), 241-276 (QEDH…NDDA), 721-746 (SEIP…ENQL), and 1083-1139 (KTGD…GTSL). Positions 1084-1130 (TGDDNAPRNPEMHDPPKIDRRMQEGSDERDEQSHTDSEANGDNKDPE) are enriched in basic and acidic residues. The region spanning 1316–1639 (NLNNRESEPS…RFRKAMTTYF (324 aa)) is the PIPK domain.

Component of the PI(3,5)P2 regulatory complex at least composed of ATG18, SAC/FIG4, FAB1 and VAC14. It depends on Mg(2+) as a cofactor. Requires Mn(2+) as cofactor.

It carries out the reaction a 1,2-diacyl-sn-glycero-3-phospho-(1D-myo-inositol-3-phosphate) + ATP = a 1,2-diacyl-sn-glycero-3-phospho-(1D-myo-inositol-3,5-bisphosphate) + ADP + H(+). Its function is as follows. The PI(3,5)P2 regulatory complex regulates both the synthesis and turnover of phosphatidylinositol 3,5-bisphosphate (PtdIns(3,5)P2). Catalyzes the phosphorylation of phosphatidylinositol 3-phosphate on the fifth hydroxyl of the myo-inositol ring, to form phosphatidylinositol 3,5-bisphosphate. In Arabidopsis thaliana (Mouse-ear cress), this protein is Putative 1-phosphatidylinositol-3-phosphate 5-kinase FAB1C (FAB1C).